A 237-amino-acid chain; its full sequence is Tyrosine-protein kinase YwqD (237 aa).

A Phosphotyrosine; by autocatalysis modification is found at tyrosine 228.

The protein belongs to the CpsD/CapB family. Autophosphorylated in vitro, which inhibits ATPase activity. Dephosphorylated by YwqE in vitro.

It carries out the reaction L-tyrosyl-[protein] + ATP = O-phospho-L-tyrosyl-[protein] + ADP + H(+). Functionally, may be involved in the regulation of capsular polysaccharide biosynthesis. Autophosphorylates in vitro. Phosphorylates and activates in vitro two UDP-glucose dehydrogenases, YwqF and TuaD, as well as the DNA-binding proteins Ssb and SsbB. In Bacillus subtilis (strain 168), this protein is Tyrosine-protein kinase YwqD (ywqD).